Reading from the N-terminus, the 708-residue chain is Nicastrin (708 aa).

The N-terminal stretch at 1 to 34 (MATARGGSGPDPGSRGLLLLSFSVVLAGLCGGNS) is a signal peptide. The Lumenal segment spans residues 35–668 (VERKIYIPLN…IFLIASKELE (634 aa)). Residues asparagine 44, asparagine 54, and asparagine 128 are each glycosylated (N-linked (GlcNAc...) asparagine). The cysteines at positions 49 and 61 are disulfide-linked. Cysteine 139 and cysteine 158 are disulfide-bonded. N-linked (GlcNAc...) asparagine glycosylation is found at asparagine 186 and asparagine 203. 2 disulfide bridges follow: cysteine 194–cysteine 212 and cysteine 229–cysteine 247. Residues asparagine 263, asparagine 386, asparagine 434, asparagine 463, asparagine 507, asparagine 529, asparagine 561, asparagine 572, asparagine 579, asparagine 593, and asparagine 611 are each glycosylated (N-linked (GlcNAc...) asparagine). Cysteines 585 and 619 form a disulfide. A helical membrane pass occupies residues 669–689 (FITLIVGFSILVFSLIVTYCI). The Cytoplasmic segment spans residues 690–708 (NAKADVLFVAPREPGAVSY).

It belongs to the nicastrin family. Component of the gamma-secretase complex. The functional gamma-secretase complex is composed of at least four polypeptides: a presenilin homodimer (PSEN1 or PSEN2), nicastrin (NCSTN), APH1 (APH1A or APH1B) and PEN2. Binds to proteolytic processed C-terminal fragments C83 and C99 of the amyloid precursor protein (APP). Interacts with PSEN1 and PSEN2. N-glycosylated.

The protein resides in the membrane. It localises to the cytoplasmic vesicle membrane. The protein localises to the melanosome. Its function is as follows. Essential subunit of the gamma-secretase complex, an endoprotease complex that catalyzes the intramembrane cleavage of integral membrane proteins such as Notch receptors and APP (amyloid-beta precursor protein). The gamma-secretase complex plays a role in Notch and Wnt signaling cascades and regulation of downstream processes via its role in processing key regulatory proteins, and by regulating cytosolic CTNNB1 levels. In Rattus norvegicus (Rat), this protein is Nicastrin (Ncstn).